The following is a 333-amino-acid chain: Minor fimbrium tip subunit MfA4 (333 aa).

The N-terminal stretch at 1-18 (MKKYLLYASLLTSVLLFS) is a signal peptide. Residue cysteine 19 is the site of N-palmitoyl cysteine attachment. Cysteine 19 carries S-diacylglycerol cysteine lipidation. Residues 19–53 (CSKNNPSEPVEDRSIEISIRVDDFTKTGETVRYER) constitute a propeptide that is removed on maturation.

Belongs to the bacteroidetes fimbrillin superfamily. FimA/Mfa1 family. In terms of assembly, component of the fimbrium tip. Minor fimbriae are composed of a structural subunit, most often Mfa1, and the accessory subunits Mfa3, Mfa4 and Mfa5. Mfa4 is required for Mfa3 and Mfa5 insertion into the fimbrium. Fimbrium assembly occurs by linear, head-to-tail oligomerization of fimbrial subunits. This is mediated via insertion of a C-terminal beta-strand from one subunit into a groove in the N-terminal domain of the following subunit.

Its subcellular location is the fimbrium. It localises to the cell outer membrane. Its function is as follows. Tip subunit of the minor fimbriae. These filamentous pili are attached to the cell surface; they mediate biofilm formation, adhesion onto host cells and onto other bacteria that are part of the oral microbiome. They play an important role in invasion of periodontal tissues and are recognized as major virulence factors. This is Minor fimbrium tip subunit MfA4 from Porphyromonas gingivalis (strain ATCC 33277 / DSM 20709 / CIP 103683 / JCM 12257 / NCTC 11834 / 2561).